A 1164-amino-acid chain; its full sequence is DNA-directed RNA polymerase 132 kDa polypeptide (1164 aa).

The protein belongs to the RNA polymerase beta chain family. The DNA-dependent RNA polymerase used for intermediate and late genes expression consists of eight subunits (147) kDa, (133) kDa, (35) kDa, (30) kDa, (22) kDa, (19) kDa, (18) kDa and (7) kDa totalling more than 500 kDa in mass. The same holoenzyme, with the addition of the transcription-specificity factor RAP94, is used for early gene expression.

The protein localises to the virion. It carries out the reaction RNA(n) + a ribonucleoside 5'-triphosphate = RNA(n+1) + diphosphate. Part of the DNA-dependent RNA polymerase which catalyzes the transcription of viral DNA into RNA using the four ribonucleoside triphosphates as substrates. Responsible for the transcription of early, intermediate and late genes. DNA-dependent RNA polymerase associates with the early transcription factor (ETF), itself composed of D6 and A7, thereby allowing the early genes transcription. Late transcription, and probably also intermediate transcription, require newly synthesized RNA polymerase. The polypeptide is DNA-directed RNA polymerase 132 kDa polypeptide (RPO132) (Camelus).